Reading from the N-terminus, the 242-residue chain is N-glycosylase/DNA lyase (242 aa).

Residues Q25, S52, and W63 each coordinate 8-oxoguanine. The tract at residues 119 to 183 (KSYYRDMNRL…VDARIERITR (65 aa)) is helix-hairpin-helix. Residue K143 is the Schiff-base intermediate with DNA of the active site. 8-oxoguanine is bound by residues F147 and P173. D175 is a catalytic residue. Residues D209 and W213 each coordinate 8-oxoguanine.

This sequence belongs to the archaeal N-glycosylase/DNA lyase (AGOG) family.

It carries out the reaction 2'-deoxyribonucleotide-(2'-deoxyribose 5'-phosphate)-2'-deoxyribonucleotide-DNA = a 3'-end 2'-deoxyribonucleotide-(2,3-dehydro-2,3-deoxyribose 5'-phosphate)-DNA + a 5'-end 5'-phospho-2'-deoxyribonucleoside-DNA + H(+). In terms of biological role, DNA repair enzyme that is part of the base excision repair (BER) pathway; protects from oxidative damage by removing the major product of DNA oxidation, 8-oxoguanine (GO), from single- and double-stranded DNA substrates. This is N-glycosylase/DNA lyase from Methanopyrus kandleri (strain AV19 / DSM 6324 / JCM 9639 / NBRC 100938).